Here is a 379-residue protein sequence, read N- to C-terminus: Queuine tRNA-ribosyltransferase (379 aa).

Asp-96 acts as the Proton acceptor in catalysis. Substrate-binding positions include 96–100 (DSGGF), Asp-150, Gln-196, and Gly-223. The interval 254–260 (GIGTPDY) is RNA binding. Asp-273 functions as the Nucleophile in the catalytic mechanism. Residues Cys-311, Cys-313, Cys-316, and His-342 each contribute to the Zn(2+) site.

It belongs to the queuine tRNA-ribosyltransferase family. As to quaternary structure, homodimer. Within each dimer, one monomer is responsible for RNA recognition and catalysis, while the other monomer binds to the replacement base PreQ1. Zn(2+) serves as cofactor.

It carries out the reaction 7-aminomethyl-7-carbaguanine + guanosine(34) in tRNA = 7-aminomethyl-7-carbaguanosine(34) in tRNA + guanine. The protein operates within tRNA modification; tRNA-queuosine biosynthesis. Functionally, catalyzes the base-exchange of a guanine (G) residue with the queuine precursor 7-aminomethyl-7-deazaguanine (PreQ1) at position 34 (anticodon wobble position) in tRNAs with GU(N) anticodons (tRNA-Asp, -Asn, -His and -Tyr). Catalysis occurs through a double-displacement mechanism. The nucleophile active site attacks the C1' of nucleotide 34 to detach the guanine base from the RNA, forming a covalent enzyme-RNA intermediate. The proton acceptor active site deprotonates the incoming PreQ1, allowing a nucleophilic attack on the C1' of the ribose to form the product. After dissociation, two additional enzymatic reactions on the tRNA convert PreQ1 to queuine (Q), resulting in the hypermodified nucleoside queuosine (7-(((4,5-cis-dihydroxy-2-cyclopenten-1-yl)amino)methyl)-7-deazaguanosine). In Treponema denticola (strain ATCC 35405 / DSM 14222 / CIP 103919 / JCM 8153 / KCTC 15104), this protein is Queuine tRNA-ribosyltransferase.